Here is a 564-residue protein sequence, read N- to C-terminus: MSSEILQTGLQLVKSAIDADNQKNYSLACNLYDQAVLNLKLALVAEREPSKNALISSKIEEYSQRNKFIKNLLSQQPQSSQPSQPQQSQFSFPSVPSSISPSINQQQQQQQQQINNNNNSILSSFPSAGNTNNNNNNTSNGFSPPNLNKNEQLSKLNSLSIGNNQSTNRQLSRVEAYEAAKNFSLKGRKEEEVKNYRGASQCYEEACNYYLMAIKSEPDPTLKKNLSDEAKIYLDRIEVLKPFAASQPQPQQPQQPQPQQPQQQQFQQQSYNNNNSTQSMLSSFPSFNGSTNSLNNSLNNSNNNFNQILTNSNMPIAQQNFLQNHQFNQSNNSFNNATSSLPLTFSGDKCAACDALLSTNSIKALDRNWHAECFQVSIICAGCQKPFALSNLSLKVKDNRAYHPMCFESTTGLSQEEIRTFVGSSKQLFFSIQLQRKFYRAGETIQFGFTIDNGTTKKVEKVVAYLLMTETRMEITGTAYERKPKRTIKKLGRCEFHHSNRFPLIKDRFEGDFFYSIPPNILPSEVTGVDASFVREYQLIVKCVGPPLKIMTVKLKFNLTILDK.

Over residues 74-146 the composition is skewed to low complexity; it reads SQQPQSSQPS…NTSNGFSPPN (73 aa). Disordered regions lie at residues 74–150 and 245–286; these read SQQP…LNKN and ASQP…SFPS. A compositionally biased stretch (pro residues) spans 250 to 259; it reads PQQPQQPQPQ. Over residues 260–269 the composition is skewed to low complexity; it reads QPQQQQFQQQ. Over residues 270 to 285 the composition is skewed to polar residues; the sequence is SYNNNNSTQSMLSSFP. The LIM zinc-binding domain occupies 348-413; that stretch reads DKCAACDALL…PMCFESTTGL (66 aa).

The polypeptide is Arrestin domain-containing protein E (adcE) (Dictyostelium discoideum (Social amoeba)).